We begin with the raw amino-acid sequence, 262 residues long: Matrilysin (262 aa).

The N-terminal stretch at L1 to A12 is a signal peptide. The propeptide at L13–E89 is activation peptide. Residues P80–T87 carry the Cysteine switch motif. C82 contributes to the Zn(2+) binding site. D148 is a Ca(2+) binding site. Zn(2+) contacts are provided by H158 and D160. 4 residues coordinate Ca(2+): D165, G166, G168, and T170. H173 provides a ligand contact to Zn(2+). Residues G180, G182, and D184 each contribute to the Ca(2+) site. H186 is a Zn(2+) binding site. Positions 188 and 191 each coordinate Ca(2+). H209 lines the Zn(2+) pocket. Residue E210 is part of the active site. H213 and H219 together coordinate Zn(2+).

It belongs to the peptidase M10A family. It depends on Ca(2+) as a cofactor. The cofactor is Zn(2+).

The protein resides in the secreted. The protein localises to the extracellular space. It localises to the extracellular matrix. The catalysed reaction is Cleavage of 14-Ala-|-Leu-15 and 16-Tyr-|-Leu-17 in B chain of insulin. No action on collagen types I, II, IV, V. Cleaves gelatin chain alpha2(I) &gt; alpha1(I).. In terms of biological role, degrades casein, gelatins of types I, III, IV, and V, and fibronectin. Activates procollagenase. This is Matrilysin (MMP7) from Felis catus (Cat).